Consider the following 402-residue polypeptide: Serine/threonine transporter SstT (402 aa).

8 helical membrane-spanning segments follow: residues 17-37 (IAIGVVIGAILGLLIPKITVI), 44-64 (FVGGLKAIAPLLVSALVANAL), 78-98 (IIVLYLFGTFAAALTAVISHY), 138-158 (ALSQANYIGVLLWAVVFGFAM), 179-199 (IVRWIINLAPFGILGLVFDTI), 212-232 (VLILVLVGTMTFVALVINPII), 295-315 (MAGAAVTINVLTLAAVTTLGI), and 336-356 (ASGIAGGSLLLVPVACSLFGI).

This sequence belongs to the dicarboxylate/amino acid:cation symporter (DAACS) (TC 2.A.23) family.

It localises to the cell membrane. The enzyme catalyses L-serine(in) + Na(+)(in) = L-serine(out) + Na(+)(out). It catalyses the reaction L-threonine(in) + Na(+)(in) = L-threonine(out) + Na(+)(out). In terms of biological role, involved in the import of serine and threonine into the cell, with the concomitant import of sodium (symport system). The polypeptide is Serine/threonine transporter SstT (Streptococcus thermophilus (strain CNRZ 1066)).